The primary structure comprises 144 residues: Large ribosomal subunit protein uL13 (144 aa).

The protein belongs to the universal ribosomal protein uL13 family. As to quaternary structure, part of the 50S ribosomal subunit.

Its function is as follows. This protein is one of the early assembly proteins of the 50S ribosomal subunit, although it is not seen to bind rRNA by itself. It is important during the early stages of 50S assembly. This chain is Large ribosomal subunit protein uL13, found in Nitrosomonas europaea (strain ATCC 19718 / CIP 103999 / KCTC 2705 / NBRC 14298).